The following is a 698-amino-acid chain: Interleukin-17 receptor C (698 aa).

A signal peptide spans 1 to 21 (MPVSWFLLSLALGRNPVVVSL). Topologically, residues 22–464 (ERLMEPQDTA…CPMDKYIHRR (443 aa)) are extracellular. A glycan (N-linked (GlcNAc...) asparagine) is linked at Asn-182. Residues Cys-190 and Cys-202 are joined by a disulfide bond. N-linked (GlcNAc...) asparagine glycans are attached at residues Asn-209, Asn-249, Asn-255, and Asn-259. 6 disulfide bridges follow: Cys-266–Cys-316, Cys-268–Cys-284, Cys-325–Cys-334, Cys-364–Cys-378, Cys-406–Cys-413, and Cys-440–Cys-455. The chain crosses the membrane as a helical span at residues 465 to 485 (WVLVWLACLLLAAALFFFLLL). The Cytoplasmic segment spans residues 486-698 (KKDRRKAARG…WDLGPCTTLE (213 aa)). An SEFIR domain is found at 496 to 645 (SRTALLLHSA…LPSQLPAFLD (150 aa)).

As to quaternary structure, homodimer; disulfide-linked. Heterodimer with IL17RA. Heterodimerization with IL17RA is independent of the cytoplasmic tail. Associates with non-glycosylated IL17RA constitutively. Binding of IL17A and IL17F induces association with glycosylated IL17RA. Forms complexes with 2:1 binding stoichiometry: two receptor chains for one interleukin molecule. IL17A homodimer preferentially drives the formation of IL17RA-IL17RC heterodimeric receptor complex, whereas IL17F homodimer forms predominantly complexes with IL17RC homodimer. IL17A-IL17F forms complexes with IL17RA-IL17RC, but with lower affinity when compared to IL17A homodimer. IL17RC chain cannot distinguish between IL17A and IL17F molecules, potentially enabling the formation of topologically distinct complexes. Interacts (through SEFIR domain and extended downstream region) with TRAF3IP2/ACT1 (phosphorylated). In terms of tissue distribution, highly expressed in colonic epithelial cells. Expressed in lung epithelial cells. Expressed in macrophages. Highly expressed in B-1a B cells and at a lower extent in B-1b and B-2 B cells (at protein level).

It is found in the cell membrane. In terms of biological role, receptor for IL17A and IL17F, major effector cytokines of innate and adaptive immune system involved in antimicrobial host defense and maintenance of tissue integrity. Receptor for IL17A and IL17F homodimers as part of a heterodimeric complex with IL17RA. Receptor for the heterodimer formed by IL17A and IL17B as part of a heterodimeric complex with IL17RA. Has also been shown to be the cognate receptor for IL17F and to bind IL17A with high affinity without the need for IL17RA. Upon binding of IL17F homodimer triggers downstream activation of TRAF6 and NF-kappa-B signaling pathway. Induces transcriptional activation of IL33, a potent cytokine that stimulates group 2 innate lymphoid cells and adaptive T-helper 2 cells involved in pulmonary allergic response to fungi. Promotes sympathetic innervation of peripheral organs by coordinating the communication between gamma-delta T cells and parenchymal cells. Stimulates sympathetic innervation of thermogenic adipose tissue by driving TGFB1 expression. Binding of IL17A-IL17F to IL17RA-IL17RC heterodimeric receptor complex triggers homotypic interaction of IL17RA and IL17RC chains with TRAF3IP2 adapter through SEFIR domains. This leads to downstream TRAF6-mediated activation of NF-kappa-B and MAPkinase pathways ultimately resulting in transcriptional activation of cytokines, chemokines, antimicrobial peptides and matrix metalloproteinases, with potential strong immune inflammation. Primarily induces neutrophil activation and recruitment at infection and inflammatory sites. Stimulates the production of antimicrobial beta-defensins DEFB1, DEFB103A, and DEFB104A by mucosal epithelial cells, limiting the entry of microbes through the epithelial barriers. The chain is Interleukin-17 receptor C (Il17rc) from Mus musculus (Mouse).